The chain runs to 271 residues: Adenosylcobinamide-GDP ribazoletransferase (271 aa).

A run of 7 helical transmembrane segments spans residues phenylalanine 4–methionine 24, tyrosine 35–threonine 55, phenylalanine 58–leucine 78, serine 108–isoleucine 128, valine 135–isoleucine 155, phenylalanine 192–isoleucine 212, and isoleucine 246–leucine 266.

It belongs to the CobS family. The cofactor is Mg(2+).

It localises to the cell membrane. It catalyses the reaction alpha-ribazole + adenosylcob(III)inamide-GDP = adenosylcob(III)alamin + GMP + H(+). The catalysed reaction is alpha-ribazole 5'-phosphate + adenosylcob(III)inamide-GDP = adenosylcob(III)alamin 5'-phosphate + GMP + H(+). The protein operates within cofactor biosynthesis; adenosylcobalamin biosynthesis; adenosylcobalamin from cob(II)yrinate a,c-diamide: step 7/7. Its function is as follows. Joins adenosylcobinamide-GDP and alpha-ribazole to generate adenosylcobalamin (Ado-cobalamin). Also synthesizes adenosylcobalamin 5'-phosphate from adenosylcobinamide-GDP and alpha-ribazole 5'-phosphate. The chain is Adenosylcobinamide-GDP ribazoletransferase from Methanococcoides burtonii (strain DSM 6242 / NBRC 107633 / OCM 468 / ACE-M).